Reading from the N-terminus, the 389-residue chain is Dihydroorotase (389 aa).

2 residues coordinate Zn(2+): H51 and H53. Substrate contacts are provided by residues 53 to 55 (HVR) and N85. K133, H158, H192, and D254 together coordinate Zn(2+). The residue at position 133 (K133) is an N6-carboxylysine. D254 is a catalytic residue. Substrate contacts are provided by residues H258 and 272–273 (PG).

This sequence belongs to the metallo-dependent hydrolases superfamily. DHOase family. Class I DHOase subfamily. Zn(2+) is required as a cofactor.

It carries out the reaction (S)-dihydroorotate + H2O = N-carbamoyl-L-aspartate + H(+). Its pathway is pyrimidine metabolism; UMP biosynthesis via de novo pathway; (S)-dihydroorotate from bicarbonate: step 3/3. Catalyzes the reversible cyclization of carbamoyl aspartate to dihydroorotate. This chain is Dihydroorotase, found in Sulfurisphaera tokodaii (strain DSM 16993 / JCM 10545 / NBRC 100140 / 7) (Sulfolobus tokodaii).